The chain runs to 212 residues: Redox-sensing transcriptional repressor Rex (212 aa).

Residues 17–56 (LYYRIFKRFNTDGIEKASSKQIADALGIDSATVRRDFSYF) constitute a DNA-binding region (H-T-H motif). 91 to 96 (GCGNIG) lines the NAD(+) pocket.

It belongs to the transcriptional regulatory Rex family. As to quaternary structure, homodimer.

It localises to the cytoplasm. Functionally, modulates transcription in response to changes in cellular NADH/NAD(+) redox state. The protein is Redox-sensing transcriptional repressor Rex of Streptococcus agalactiae serotype III (strain NEM316).